A 408-amino-acid chain; its full sequence is UPF0761 membrane protein NMC0462 (408 aa).

Helical transmembrane passes span Leu43–Phe63, Leu100–Asp120, Phe139–Phe159, Trp176–Leu196, Ala210–Trp230, and Val248–Leu268.

This sequence belongs to the UPF0761 family.

It localises to the cell inner membrane. The chain is UPF0761 membrane protein NMC0462 from Neisseria meningitidis serogroup C / serotype 2a (strain ATCC 700532 / DSM 15464 / FAM18).